The primary structure comprises 476 residues: MTKPQQQSPPSTTATTTTSPPPPPPSTPPPASSSSSSLAKLPLRLHSLASSSRSLLSALRRSPVTTLVAAFFLLALFMYGEDVRTLAELSIDDYLYPDADFYNVSALPPLLLPPPTCDLSRGRWVFDNTSLPAYREKECTFLTKQVSCLANGRPDDLWQYWRWQPNNCSLPTFDARRFMEKMRGKRMMFVGDSLNRNQWESLVCLVQPILSKGRKKIVKRGSFNIFYAKEYRATLEFYWAPFLVESNSDNPNFHHIDQRIISPERIESHANNWKDVDYLIFNTYIWWMNNEDIKVRRPNSTSWSDHDEVPRIETYGRVFKTWSTWLEQNVDPARTSVFFMTISPLHNSPAQWGNPNGIKCVKETLPVLNYTKPLDLNHDMRMYDLVAKVAKNMKNVPVSLIDITRMSDYRKDAHTSLYSIRQGKLLTPEQKADPQKYADCIHWCLPGVPDVWNQILYTRILSKSSPPSPHPPLPPQ.

Positions 1–37 are disordered; the sequence is MTKPQQQSPPSTTATTTTSPPPPPPSTPPPASSSSSS. At 1-63 the chain is on the cytoplasmic side; the sequence is MTKPQQQSPP…SLLSALRRSP (63 aa). Positions 8-18 are enriched in low complexity; it reads SPPSTTATTTT. Residues 19–31 are compositionally biased toward pro residues; it reads SPPPPPPSTPPPA. Residues 64–80 form a helical; Signal-anchor for type II membrane protein membrane-spanning segment; the sequence is VTTLVAAFFLLALFMYG. The Lumenal segment spans residues 81–476; it reads EDVRTLAELS…PSPHPPLPPQ (396 aa). Residues asparagine 103, asparagine 128, and asparagine 167 are each glycosylated (N-linked (GlcNAc...) asparagine). 4 cysteine pairs are disulfide-bonded: cysteine 117–cysteine 168, cysteine 139–cysteine 204, cysteine 148–cysteine 444, and cysteine 360–cysteine 440. Residues 191-193 carry the GDS motif motif; sequence GDS. Serine 193 (nucleophile) is an active-site residue. N-linked (GlcNAc...) asparagine glycans are attached at residues asparagine 299 and asparagine 369. The active-site Proton donor is aspartate 439. The DXXH motif signature appears at 439–442; the sequence is DCIH. Residue histidine 442 is the Proton acceptor of the active site.

The protein belongs to the PC-esterase family. TBL subfamily. As to expression, highly expressed in leaves. Expressed in roots, stems and inflorescences.

It is found in the golgi apparatus membrane. Xylan acetyltransferase required for 2-O- and 3-O-monoacetylation of xylosyl residues in xylan. Catalyzes the 2-O-acetylation of xylan, followed by nonenzymatic acetyl migration to the O-3 position, resulting in products that are monoacetylated at both O-2 and O-3 positions. The protein is Xylan O-acetyltransferase 4 of Oryza sativa subsp. japonica (Rice).